Reading from the N-terminus, the 881-residue chain is Dynamin-like GTPase MGM1, mitochondrial (881 aa).

Residues 1–59 (MNASPVRLLILRRQLATHPAILYSSPYIKSPLVHLHSRMSNVHRSAHANALSFVITRRS) constitute a mitochondrion transit peptide. The Mitochondrial matrix portion of the chain corresponds to 60–72 (ISHFPKIISKIIR). A helical; Signal-anchor for type II membrane protein membrane pass occupies residues 73–92 (LPIYVGGGMAAAGSYIAYKM). The Mitochondrial intermembrane segment spans residues 93-881 (EEASSFTKDK…KSYKGVSKNL (789 aa)). Residues 145-183 (ATSLDDDESKRQGDPKDDDDEDDDDEDDENDSVDTTQDE) are disordered. Residues 160–176 (KDDDDEDDDDEDDENDS) show a composition bias toward acidic residues. In terms of domain architecture, Dynamin-type G spans 207–505 (HLTLPSIVVI…LEISMSNALE (299 aa)). Positions 217-224 (GSQSSGKS) are G1 motif. Positions 220, 221, 222, 223, 224, 225, and 239 each coordinate GTP. Mg(2+) is bound at residue Ser224. A G2 motif region spans residues 243-245 (VTR). Residues Thr244 and Asp317 each contribute to the Mg(2+) site. The tract at residues 317 to 320 (DLPG) is G3 motif. The G4 motif stretch occupies residues 385–388 (TKLD). Positions 386, 388, and 415 each coordinate GTP. Positions 414–417 (ITKT) are G5 motif. The interval 668–780 (STADQVENCI…KMLKNKCHST (113 aa)) is paddle region. Cys777 and Cys786 form a disulfide bridge. The 93-residue stretch at 780–872 (TIEKDRCPEV…KIDSILVFKK (93 aa)) folds into the GED domain.

The protein belongs to the TRAFAC class dynamin-like GTPase superfamily. Dynamin/Fzo/YdjA family. In terms of assembly, oligomeric complex consisting of membrane-bound and soluble forms of MGM1. Associates with FZO1 through interaction with the intermembrane space domain of UGO1 which binds FZO1 through its cytoplasmic domain. Cleavage of the transit peptide by mitochondrial processing protease (MPP) produces a long integral membrane form of MGM1 (l-MGM1). Further processing by the rhomboid protease PCP1 produces a short peripheral membrane form of MGM1 (s-MGM1). Both isoforms are required for full activity.

Its subcellular location is the mitochondrion inner membrane. The protein localises to the mitochondrion intermembrane space. The enzyme catalyses GTP + H2O = GDP + phosphate + H(+). In terms of biological role, dynamin-related GTPase that is essential for normal mitochondrial morphology by mediating fusion of the mitochondrial inner membranes, regulating cristae morphology and maintaining respiratory chain function. Exists in two forms: the transmembrane, long form (Dynamin-like GTPase MGM1, long form; L-MGM1), which is tethered to the inner mitochondrial membrane, and the short soluble form (Dynamin-like GTPase MGM1, short form; S-MGM1), which results from proteolytic cleavage and localizes in the intermembrane space. Both forms (L-MGM1 and S-MGM1) cooperate to catalyze the fusion of the mitochondrial inner membrane. The equilibrium between L-MGM1 and S-MGM1 is essential: excess levels of S-MGM1, following loss of mitochondrial membrane potential, lead to an impaired equilibrium between L-MGM1 and S-MGM1, inhibiting mitochondrial fusion. Plays a role in the maintenance and remodeling of mitochondrial cristae, some invaginations of the mitochondrial inner membrane that provide an increase in the surface area. Probably acts by forming helical filaments at the inside of inner membrane tubes with the shape and dimensions of crista junctions. Its function is as follows. Constitutes the transmembrane long form (L-MGM1) that plays a central role in mitochondrial inner membrane fusion and cristae morphology. L-MGM1 and the soluble short form (S-MGM1) form higher-order helical assemblies that coordinate the fusion of mitochondrial inner membranes. Inner membrane-anchored L-MGM1 molecules initiate membrane remodeling by recruiting soluble S-MGM1 to rapidly polymerize into a flexible cylindrical scaffold encaging the mitochondrial inner membrane. Once at the membrane surface, the formation of S-MGM1 helices induce bilayer curvature. MGM1 dimerization through the paddle region, which inserts into cardiolipin-containing membrane, promotes GTP hydrolysis and the helical assembly of a flexible MGM1 lattice on the membrane, which drives membrane curvature and mitochondrial fusion. Functionally, constitutes the soluble short form (S-MGM1) generated by cleavage by PCP1, which plays a central role in mitochondrial inner membrane fusion and cristae morphology. The transmembrane long form (L-MGM1) and the S-MGM1 form higher-order helical assemblies that coordinate the fusion of mitochondrial inner membranes. Inner membrane-anchored L-MGM1 molecules initiate membrane remodeling by recruiting soluble S-MGM1 to rapidly polymerize into a flexible cylindrical scaffold encaging the mitochondrial inner membrane. Once at the membrane surface, the formation of S-MGM1 helices induce bilayer curvature. MGM1 dimerization through the paddle region, which inserts into cardiolipin-containing membrane, promotes GTP hydrolysis and the helical assembly of a flexible MGM1 lattice on the membrane, which drives membrane curvature and mitochondrial fusion. Excess levels of S-MGM1 produced by cleavage by PCP1 following stress conditions that induce loss of mitochondrial membrane potential, lead to an impaired equilibrium between L-MGM1 and S-MGM1, thereby inhibiting mitochondrial fusion. In Saccharomyces cerevisiae (strain ATCC 204508 / S288c) (Baker's yeast), this protein is Dynamin-like GTPase MGM1, mitochondrial.